The following is a 537-amino-acid chain: CTP synthase (537 aa).

The interval 1-267 (MTKYIFVTGG…DQIVLDHFDV (267 aa)) is amidoligase domain. A CTP-binding site is contributed by Ser-13. Ser-13 is a binding site for UTP. 14 to 19 (SIGKGI) provides a ligand contact to ATP. Residue Tyr-54 coordinates L-glutamine. Asp-71 is an ATP binding site. The Mg(2+) site is built by Asp-71 and Glu-141. CTP contacts are provided by residues 148–150 (DIE), 188–193 (KTKPTQ), and Lys-224. UTP contacts are provided by residues 188-193 (KTKPTQ) and Lys-224. The Glutamine amidotransferase type-1 domain maps to 292 to 535 (KIALVGKYVA…IDAANQTGKV (244 aa)). Gly-354 is a binding site for L-glutamine. The active-site Nucleophile; for glutamine hydrolysis is the Cys-381. Residues 382-385 (LGMQ), Glu-405, and Arg-463 contribute to the L-glutamine site. Residues His-508 and Glu-510 contribute to the active site.

It belongs to the CTP synthase family. Homotetramer.

It carries out the reaction UTP + L-glutamine + ATP + H2O = CTP + L-glutamate + ADP + phosphate + 2 H(+). The catalysed reaction is L-glutamine + H2O = L-glutamate + NH4(+). It catalyses the reaction UTP + NH4(+) + ATP = CTP + ADP + phosphate + 2 H(+). It participates in pyrimidine metabolism; CTP biosynthesis via de novo pathway; CTP from UDP: step 2/2. Its activity is regulated as follows. Allosterically activated by GTP, when glutamine is the substrate; GTP has no effect on the reaction when ammonia is the substrate. The allosteric effector GTP functions by stabilizing the protein conformation that binds the tetrahedral intermediate(s) formed during glutamine hydrolysis. Inhibited by the product CTP, via allosteric rather than competitive inhibition. Functionally, catalyzes the ATP-dependent amination of UTP to CTP with either L-glutamine or ammonia as the source of nitrogen. Regulates intracellular CTP levels through interactions with the four ribonucleotide triphosphates. This chain is CTP synthase, found in Lactiplantibacillus plantarum (strain ATCC BAA-793 / NCIMB 8826 / WCFS1) (Lactobacillus plantarum).